The following is a 339-amino-acid chain: Protoheme IX farnesyltransferase (339 aa).

The interval 1 to 27 is disordered; it reads MTVADPRLTDAPAHSRTSLLGRRRGGR. 9 helical membrane-spanning segments follow: residues 45–65, 67–87, 117–136, 140–159, 165–185, 191–211, 236–256, 257–277, and 309–329; these read IVELLLITTIPVMLFAAGGLP, GWLILTTFVGGALAAGCANTL, ALVFATVLGIASTAIFVAFV, SAALALGAILLYVVGYTLLL, QNIVWGGVAGCMQVLIGWTAV, WAPFVLFGVIFLWTPPHYWPL, VSRQIVLYTIAMVLCSLLLVP, LGGAGVVYGAAALVLGIGFLV, and PMGVFHGSITYLTLLSAAVAV.

It belongs to the UbiA prenyltransferase family. Protoheme IX farnesyltransferase subfamily.

It is found in the cell membrane. The enzyme catalyses heme b + (2E,6E)-farnesyl diphosphate + H2O = Fe(II)-heme o + diphosphate. It functions in the pathway porphyrin-containing compound metabolism; heme O biosynthesis; heme O from protoheme: step 1/1. Functionally, converts heme B (protoheme IX) to heme O by substitution of the vinyl group on carbon 2 of heme B porphyrin ring with a hydroxyethyl farnesyl side group. The chain is Protoheme IX farnesyltransferase from Kineococcus radiotolerans (strain ATCC BAA-149 / DSM 14245 / SRS30216).